Consider the following 514-residue polypeptide: Beta-secretase 2 (514 aa).

Positions 1–19 (MGALLRALLLLVLAQWLLS) are cleaved as a signal peptide. Positions 20-62 (AVPALAPAPFTLPLQVAGATNHRASAVPGLGTPELPRADGLAL) are excised as a propeptide. Residues 20–469 (AVPALAPAPF…NEPILWIVSY (450 aa)) are Extracellular-facing. One can recognise a Peptidase A1 domain in the interval 88–425 (YYLEMLIGTP…DRAQRRVGFA (338 aa)). D106 is an active-site residue. N166 carries an N-linked (GlcNAc...) asparagine glycan. 3 disulfides stabilise this stretch: C229–C429, C288–C453, and C340–C389. Residue D299 is part of the active site. An N-linked (GlcNAc...) asparagine glycan is attached at N362. The helical transmembrane segment at 470–490 (ALMSVCGAILLVLILLLLLPL) threads the bilayer. Residues 491-514 (HCRHAPRDPEVVNDESSLVRHRWK) lie on the Cytoplasmic side of the membrane.

It belongs to the peptidase A1 family. In terms of assembly, monomer. Interacts with RTN3 and RTN4. Post-translationally, undergoes autoproteolytic cleavage. In terms of processing, glycosylated. In terms of tissue distribution, high expression in pancreatic islets. Expressed at much lower levels in the pituitary, colon, and ovaries and is nearly absent from all the other tissues.

The protein localises to the cell membrane. It localises to the golgi apparatus. Its subcellular location is the endoplasmic reticulum. The protein resides in the endosome. It is found in the melanosome. The enzyme catalyses Broad endopeptidase specificity. Cleaves Glu-Val-Asn-Leu-|-Asp-Ala-Glu-Phe in the Swedish variant of Alzheimer's amyloid precursor protein.. Functionally, responsible for the proteolytic processing of the amyloid precursor protein (APP). Cleaves APP, between residues 690 and 691, leading to the generation and extracellular release of beta-cleaved soluble APP, and a corresponding cell-associated C-terminal fragment which is later released by gamma-secretase. It has also been shown that it can cleave APP between residues 671 and 672. Involved in the proteolytic shedding of PMEL at early stages of melanosome biogenesis. Cleaves PMEL within the M-beta fragment to release the amyloidogenic PMEL luminal fragment containing M-alpha and a small portion of M-beta N-terminus. This is a prerequisite step for subsequent processing and assembly of PMEL fibrils into amyloid sheets. Responsible also for the proteolytic processing of CLTRN in pancreatic beta cells. This is Beta-secretase 2 (Bace2) from Mus musculus (Mouse).